Consider the following 1076-residue polypeptide: Histone deacetylase 4 (1076 aa).

Residues 66 to 169 (REQQLQQELL…GKESAVASTE (104 aa)) adopt a coiled-coil conformation. The segment at 117–312 (MLAMKHQQEL…NSSSGNVSTE (196 aa)) is interaction with MEF2A. Positions 132–162 (KLERHRQEQELEKQHREQKLQQLKNKEKGKE) are enriched in basic and acidic residues. Disordered stretches follow at residues 132 to 166 (KLERHRQEQELEKQHREQKLQQLKNKEKGKESAVA), 205 to 225 (TQHSSLDQSSPPQSGVSASYN), and 239 to 323 (PLRK…PSAP). Residues 205 to 224 (TQHSSLDQSSPPQSGVSASY) are compositionally biased toward polar residues. Ser209 carries the post-translational modification Phosphoserine. Ser245 carries the post-translational modification Phosphoserine; by CaMK4 and SIK1. Basic and acidic residues predominate over residues 258–273 (KVAERRSSPLLRRKDG). Low complexity predominate over residues 289–310 (SACSSAPGSGPSSPNSSSGNVS). Positions 348–353 (PSLPNI) match the PxLPxI/L motif; mediates interaction with ANKRA2 and 14-3-3 proteins motif. At Ser349 the chain carries Phosphoserine. Ser465 carries the post-translational modification Phosphoserine; by CaMK4 and SIK1. Disordered stretches follow at residues 506–529 (ISKPSEPPRQPESHPEETEEELRE), 541–580 (RLPGQKEPSLAGVQVKQEPIESEEEEAEATRETEPGQRPA), and 622–645 (RPLSRAQSSPASATFPMSVQEPPT). Over residues 514–529 (RQPESHPEETEEELRE) the composition is skewed to basic and acidic residues. A Glycyl lysine isopeptide (Lys-Gly) (interchain with G-Cter in SUMO) cross-link involves residue Lys556. Position 562 is a phosphoserine (Ser562). A compositionally biased stretch (polar residues) spans 626-638 (RAQSSPASATFPM). Ser629 carries the post-translational modification Phosphoserine; by CaMK4. A Phosphoserine modification is found at Ser630. The segment at 652–1076 (GLVYDTLMLK…EEPMEEEPPL (425 aa)) is histone deacetylase. 4 residues coordinate Zn(2+): Cys664, Cys666, His672, and Cys743. His795 is a catalytic residue. Positions 1043–1076 (EEAETVTAMASLSVGVKPAEKRSEEEPMEEEPPL) match the Nuclear export signal motif.

The protein belongs to the histone deacetylase family. HD type 2 subfamily. Homodimer. Homodimerization via its N-terminal domain. Interacts with HDAC7. Interacts with MEF2A, MEF2C, MEF2D, MORC2 and NR2C1. Interacts with a 14-3-3 chaperone proteins in a phosphorylation dependent manner. Interacts with 14-3-3 protein YWHAB. Interacts with BTBD14B. Interacts with KDM5B. Interacts (via PxLPxI/L motif) with ANKRA2 (via ankyrin repeats). Interacts with CUL7 (as part of the 3M complex); negatively regulated by ANKRA2. Interacts with EP300 in the presence of TFAP2C. Interacts with AHRR. Interacts with MYOCD. Interacts with HSPA1A and HSPA1B leading to their deacetylation at 'Lys-77'. Interacts with ZBTB7B; the interaction allows the recruitment of HDAC4 on CD8 loci for deacetylation and possible inhibition of CD8 genes expression. Interacts with DHX36. Interacts with SIK3; this interaction leads to HDAC4 retention in the cytoplasm. Interacts with ZNF638. Post-translationally, phosphorylated by CaMK4 at Ser-245, Ser-465 and Ser-629. Phosphorylation at other residues by CaMK2D is required for the interaction with 14-3-3. Phosphorylation at Ser-349, within the PxLPxI/L motif, impairs the binding of ANKRA2 but generates a high-affinity docking site for 14-3-3. Sumoylation on Lys-556 is promoted by the E3 SUMO-protein ligase RANBP2, and prevented by phosphorylation by CaMK4.

It is found in the nucleus. The protein resides in the cytoplasm. It carries out the reaction N(6)-acetyl-L-lysyl-[histone] + H2O = L-lysyl-[histone] + acetate. Functionally, responsible for the deacetylation of lysine residues on the N-terminal part of the core histones (H2A, H2B, H3 and H4). Histone deacetylation gives a tag for epigenetic repression and plays an important role in transcriptional regulation, cell cycle progression and developmental events. Histone deacetylases act via the formation of large multiprotein complexes. Involved in muscle maturation via its interaction with the myocyte enhancer factors such as MEF2A, MEF2C and MEF2D. Deacetylates HSPA1A and HSPA1A at 'Lys-77' leading to their preferential binding to co-chaperone STUB1. This Mus musculus (Mouse) protein is Histone deacetylase 4 (Hdac4).